Here is a 97-residue protein sequence, read N- to C-terminus: Plastocyanin (97 aa).

The Plastocyanin-like domain occupies 1–97; the sequence is AEVKLGADDG…AGMKGEVTVT (97 aa). Histidine 37, cysteine 82, histidine 85, and methionine 90 together coordinate Cu cation.

Belongs to the plastocyanin family. The cofactor is Cu(2+).

It localises to the plastid. Its subcellular location is the chloroplast thylakoid membrane. Participates in electron transfer between P700 and the cytochrome b6-f complex in photosystem I. The chain is Plastocyanin (PETE) from Daucus carota (Wild carrot).